A 435-amino-acid polypeptide reads, in one-letter code: Serine--tRNA ligase (435 aa).

An L-serine-binding site is contributed by 242–244 (TAE). 273 to 275 (RSE) is a binding site for ATP. E296 serves as a coordination point for L-serine. 360–363 (EISS) lines the ATP pocket. S396 is an L-serine binding site.

It belongs to the class-II aminoacyl-tRNA synthetase family. Type-1 seryl-tRNA synthetase subfamily. Homodimer. The tRNA molecule binds across the dimer.

The protein resides in the cytoplasm. It carries out the reaction tRNA(Ser) + L-serine + ATP = L-seryl-tRNA(Ser) + AMP + diphosphate + H(+). The catalysed reaction is tRNA(Sec) + L-serine + ATP = L-seryl-tRNA(Sec) + AMP + diphosphate + H(+). It participates in aminoacyl-tRNA biosynthesis; selenocysteinyl-tRNA(Sec) biosynthesis; L-seryl-tRNA(Sec) from L-serine and tRNA(Sec): step 1/1. In terms of biological role, catalyzes the attachment of serine to tRNA(Ser). Is also able to aminoacylate tRNA(Sec) with serine, to form the misacylated tRNA L-seryl-tRNA(Sec), which will be further converted into selenocysteinyl-tRNA(Sec). The sequence is that of Serine--tRNA ligase from Vibrio atlanticus (strain LGP32) (Vibrio splendidus (strain Mel32)).